Reading from the N-terminus, the 429-residue chain is GDP-fucose protein O-fucosyltransferase 2 (429 aa).

Positions Met-1–Ala-21 are cleaved as a signal peptide. Position 53–57 (Pro-53–Asn-57) interacts with GDP-beta-L-fucose. Glu-54 acts as the Proton acceptor in catalysis. An intrachain disulfide couples Cys-161 to Cys-192. N-linked (GlcNAc...) asparagine glycosylation is found at Asn-189, Asn-209, and Asn-259. Residues His-292–Arg-294, Asp-371, and Thr-388–Phe-389 contribute to the GDP-beta-L-fucose site. Cys-412 and Cys-419 are disulfide-bonded.

This sequence belongs to the glycosyltransferase 68 family. In terms of tissue distribution, isoform A is expressed in fetal liver and peripheral blood lymphocytes. Isoform B is expressed in spleen, lung, testis, bone marrow, thymus, pancreas, prostate, fetal brain, fetal liver and fetal kidney. Isoform C is expressed in brain, heart, spleen, liver, lung, stomach, testis, placenta, skin, thymus, pancreas, mammary gland, prostate, fetal brain, fetal liver and fetal heart.

It is found in the endoplasmic reticulum. Its subcellular location is the golgi apparatus. It catalyses the reaction L-seryl-[protein] + GDP-beta-L-fucose = 3-O-(alpha-L-fucosyl)-L-seryl-[protein] + GDP + H(+). The enzyme catalyses L-threonyl-[protein] + GDP-beta-L-fucose = 3-O-(alpha-L-fucosyl)-L-threonyl-[protein] + GDP + H(+). It functions in the pathway protein modification; protein glycosylation. Inhibited by EDTA and by Zn(2+). Catalyzes the reaction that attaches fucose through an O-glycosidic linkage to a conserved serine or threonine residue in the consensus sequence C1-X-X-S/T-C2 of thrombospondin type I repeats (TSRs) where C1 and C2 are the first and second cysteines of the repeat, respectively. O-fucosylates members of several protein families including the ADAMTS, the thrombospondin (TSP) and spondin families. Required for the proper secretion of ADAMTS family members such as ADAMTSL1 and ADAMTS13. The O-fucosylation of TSRs is also required for restricting epithelial to mesenchymal transition (EMT), maintaining the correct patterning of mesoderm and localization of the definite endoderm. The chain is GDP-fucose protein O-fucosyltransferase 2 (POFUT2) from Homo sapiens (Human).